A 107-amino-acid chain; its full sequence is Serine palmitoyltransferase-regulating protein TSC3 (107 aa).

The helical transmembrane segment at 72–92 threads the bilayer; the sequence is VFFLVVFTLSLFGLLKWVLSL.

The protein localises to the endoplasmic reticulum membrane. Stimulates the activity of serine palmitoyltransferase (SPT). This is Serine palmitoyltransferase-regulating protein TSC3 (TSC3) from Eremothecium gossypii (strain ATCC 10895 / CBS 109.51 / FGSC 9923 / NRRL Y-1056) (Yeast).